Here is a 437-residue protein sequence, read N- to C-terminus: UDP-N-acetylmuramoylalanine--D-glutamate ligase (437 aa).

112 to 118 (GSNGKST) is an ATP binding site.

Belongs to the MurCDEF family.

It is found in the cytoplasm. The catalysed reaction is UDP-N-acetyl-alpha-D-muramoyl-L-alanine + D-glutamate + ATP = UDP-N-acetyl-alpha-D-muramoyl-L-alanyl-D-glutamate + ADP + phosphate + H(+). It participates in cell wall biogenesis; peptidoglycan biosynthesis. In terms of biological role, cell wall formation. Catalyzes the addition of glutamate to the nucleotide precursor UDP-N-acetylmuramoyl-L-alanine (UMA). The polypeptide is UDP-N-acetylmuramoylalanine--D-glutamate ligase (Haemophilus influenzae (strain PittEE)).